We begin with the raw amino-acid sequence, 926 residues long: Up-regulator of cell proliferation (926 aa).

S3 is modified (phosphoserine). A VLIG-type G domain is found at 689–924 (RSRLVVLSAL…NIQQLIELLR (236 aa)).

It belongs to the TRAFAC class dynamin-like GTPase superfamily. Very large inducible GTPase (VLIG) family.

It localises to the cytoplasm. The protein localises to the nucleus. May be involved in cell cycle progression through the regulation of cyclin D1 expression. The chain is Up-regulator of cell proliferation (Urgcp) from Mus musculus (Mouse).